Consider the following 348-residue polypeptide: Dihydroorotase (348 aa).

Residues H17 and H19 each contribute to the Zn(2+) site. Residues 19–21 and N45 each bind substrate; that span reads HLR. K103, H140, and H178 together coordinate Zn(2+). An N6-carboxylysine modification is found at K103. H140 serves as a coordination point for substrate. Residue L223 coordinates substrate. A Zn(2+)-binding site is contributed by D251. D251 is a catalytic residue. Substrate-binding residues include H255 and A267.

Belongs to the metallo-dependent hydrolases superfamily. DHOase family. Class II DHOase subfamily. Homodimer. Zn(2+) serves as cofactor.

The catalysed reaction is (S)-dihydroorotate + H2O = N-carbamoyl-L-aspartate + H(+). It participates in pyrimidine metabolism; UMP biosynthesis via de novo pathway; (S)-dihydroorotate from bicarbonate: step 3/3. In terms of biological role, catalyzes the reversible cyclization of carbamoyl aspartate to dihydroorotate. In Salmonella paratyphi A (strain ATCC 9150 / SARB42), this protein is Dihydroorotase.